The chain runs to 606 residues: V-type proton ATPase catalytic subunit A (606 aa).

Ala2 carries the N-acetylalanine modification. 240–247 (AFGCGKTV) contacts ATP.

The protein belongs to the ATPase alpha/beta chains family. As to quaternary structure, V-ATPase is a heteromultimeric enzyme made up of two complexes: the ATP-hydrolytic V1 complex and the proton translocation V0 complex. The V1 complex consists of three catalytic AB heterodimers that form a heterohexamer, three peripheral stalks each consisting of EG heterodimers, one central rotor including subunits D and F, and the regulatory subunits C and H. The proton translocation complex V0 consists of the proton transport subunit a, a ring of proteolipid subunits c9c'', rotary subunit d, subunits e and f, and the accessory subunits vah-19/Ac45 and vah-20/PRR. Expressed in proximal but not distal germ cells.

It catalyses the reaction ATP + H2O + 4 H(+)(in) = ADP + phosphate + 5 H(+)(out). Its activity is regulated as follows. ATP hydrolysis occurs at the interface between the nucleotide-binding domains of subunits A and B. ATP hydrolysis triggers a conformational change in the subunits D and F, which induces a shift of subunit d. The c-ring is subsequently rotated and results in a continuous proton translocation across the membrane. Functionally, catalytic subunit of the V1 complex of vacuolar(H+)-ATPase (V-ATPase), a multisubunit enzyme composed of a peripheral complex (V1) that hydrolyzes ATP and a membrane integral complex (V0) that translocates protons. V-ATPase is responsible for acidifying and maintaining the pH of intracellular compartments and in some cell types, is targeted to the plasma membrane, where it is responsible for acidifying the extracellular environment. Required along with other vacuolar ATPase components for the removal of protein aggregates which form in immature oocytes in the distal gonad. This removal occurs as the oocytes mature and move to the proximal gonad, is triggered by the introduction of sperm through mating and occurs before fertilization. The introduction of sperm triggers V-ATPase accumulation in proximal oocytes and induces lysosomal acidification which leads to engulfing of protein aggregates by lysosomes and subsequent clearance of the aggregates. Lysosomal acidification also leads to changes in mitochondrial morphology and function. Mitochondria in distal immature oocytes are fragmented, produce high levels of reactive oxygen species (ROS) and have high membrane potential, indicative of metabolic inactivity. In contrast, mitochondria in proximal mature oocytes are tubular with lower ROS levels and membrane potential, indicative of an active metabolic state required for aggregate mobilization before clearance. Involved in receptor-mediated endocytosis. This is V-type proton ATPase catalytic subunit A from Caenorhabditis elegans.